Here is a 128-residue protein sequence, read N- to C-terminus: Large ribosomal subunit protein bL17 (128 aa).

The protein belongs to the bacterial ribosomal protein bL17 family. Part of the 50S ribosomal subunit. Contacts protein L32.

The polypeptide is Large ribosomal subunit protein bL17 (Streptococcus pyogenes serotype M5 (strain Manfredo)).